The chain runs to 511 residues: Tryptophan 5-halogenase PyrH (511 aa).

Positions 10, 13, 36, 39, 42, 44, and 47 each coordinate FAD. L-tryptophan is bound at residue Ser-50. The active site involves Lys-75. Pro-93, Gln-160, and Gln-163 together coordinate L-tryptophan. FAD-binding residues include Val-195 and Leu-345. Chloride is bound by residues Thr-356 and Gly-357. Ile-358 contacts FAD. Gly-450 and Tyr-454 together coordinate L-tryptophan.

The protein belongs to the flavin-dependent halogenase family. Bacterial tryptophan halogenase subfamily. As to quaternary structure, homodimer.

The catalysed reaction is L-tryptophan + FADH2 + chloride + O2 = 5-chloro-L-tryptophan + FAD + 2 H2O. It functions in the pathway antibiotic biosynthesis. Functionally, involved in the biosynthesis of the antibiotic compound pyrroindomycin B. Catalyzes the chlorination of tryptophan (Trp) at C5 position to yield 5-chloro-L-tryptophan. It is also able to use bromide ions to generate monobrominated Trp, but the brominating activity is only about 75% of the chlorinating activity. The protein is Tryptophan 5-halogenase PyrH of Streptomyces rugosporus.